A 132-amino-acid polypeptide reads, in one-letter code: D-ribose pyranase (132 aa).

Catalysis depends on H20, which acts as the Proton donor. Substrate-binding positions include D28, H99, and 121 to 123; that span reads YSN.

This sequence belongs to the RbsD / FucU family. RbsD subfamily. As to quaternary structure, homodecamer.

The protein localises to the cytoplasm. It catalyses the reaction beta-D-ribopyranose = beta-D-ribofuranose. It participates in carbohydrate metabolism; D-ribose degradation; D-ribose 5-phosphate from beta-D-ribopyranose: step 1/2. Functionally, catalyzes the interconversion of beta-pyran and beta-furan forms of D-ribose. The protein is D-ribose pyranase of Streptococcus agalactiae serotype III (strain NEM316).